The chain runs to 796 residues: Protein SEY1 homolog (796 aa).

Topologically, residues 1–701 (MESSNDFSNK…AGTSISSWRN (701 aa)) are cytoplasmic. The GB1/RHD3-type G domain maps to 46–280 (GFRFNVVTIL…VPSDGFFVYS (235 aa)). 56–63 (GSQSSGKS) lines the GTP pocket. The stretch at 554-626 (SLVLLLKAAR…DALTLLKVLK (73 aa)) forms a coiled coil. The helical transmembrane segment at 702–722 (IPPIFWLVLLVLGWNELRSVF) threads the bilayer. Residues 723 to 725 (KVL) are Lumenal-facing. A helical transmembrane segment spans residues 726–746 (LRFYVVIPLLIVFYFTFSYSA). Topologically, residues 747–796 (TKLLGPKADQYVKPVRDKVLSLFTALLAWFVRTLHMIASKSSSFKQRPAT) are cytoplasmic.

It belongs to the TRAFAC class dynamin-like GTPase superfamily. GB1/RHD3 GTPase family. RHD3 subfamily.

The protein localises to the endoplasmic reticulum membrane. Functionally, probable GTP-binding protein that may be involved in cell development. The chain is Protein SEY1 homolog from Theileria parva (East coast fever infection agent).